Reading from the N-terminus, the 478-residue chain is MLO-like protein 13 (478 aa).

Residues 1-10 (MAEARSGSLE) are Extracellular-facing. A helical membrane pass occupies residues 11–31 (YTPTWVVAFICFIIVLLSLLA). At 32–60 (ERGLHHLGKCLKRRQQDALFEALQKLKEE) the chain is on the cytoplasmic side. The helical transmembrane segment at 61 to 81 (LMLLGFISLMLTVSQAAIRHI) threads the bilayer. Residues 82–145 (CVPPALVNNM…VSVEALHQLH (64 aa)) lie on the Extracellular side of the membrane. The chain crosses the membrane as a helical span at residues 146-166 (IFIFVLAVFHVIFCASTMVLG). At 167–276 (GARIQQWKHW…LRTLEIDFKK (110 aa)) the chain is on the cytoplasmic side. 2 helical membrane passes run 277-297 (VVSI…LNVG) and 298-318 (GWNT…MVGA). At 319 to 360 (KLEYIISSLALDVSEKRSRAEEAVITPSDELFWFHRPGIVLQ) the chain is on the cytoplasmic side. Residues 361-381 (LIHFILFQNSFEIAFFFWILF) traverse the membrane as a helical segment. At 382–400 (TYGIHSCIMEKLGYLIPRL) the chain is on the extracellular side. Residues 401 to 421 (VMGVLVQVLCSYSTLPLYALV) form a helical membrane-spanning segment. At 422–478 (TQMGSKFKKGIFDNVVQSTLEGWLEDTRNRGESTSEAHRIEMQPTTPESYNVQSENP) the chain is on the cytoplasmic side. The tract at residues 435–456 (NVVQSTLEGWLEDTRNRGESTS) is calmodulin-binding. Residues 449-462 (RNRGESTSEAHRIE) show a composition bias toward basic and acidic residues. The disordered stretch occupies residues 449–478 (RNRGESTSEAHRIEMQPTTPESYNVQSENP). The span at 464–478 (QPTTPESYNVQSENP) shows a compositional bias: polar residues.

Belongs to the MLO family.

It is found in the membrane. In terms of biological role, may be involved in modulation of pathogen defense and leaf cell death. Activity seems to be regulated by Ca(2+)-dependent calmodulin binding and seems not to require heterotrimeric G proteins. This is MLO-like protein 13 (MLO13) from Arabidopsis thaliana (Mouse-ear cress).